The following is a 494-amino-acid chain: UPF0371 protein SEQ_1471 (494 aa).

Belongs to the UPF0371 family.

This Streptococcus equi subsp. equi (strain 4047) protein is UPF0371 protein SEQ_1471.